We begin with the raw amino-acid sequence, 1933 residues long: WD repeat-containing protein 81 (1933 aa).

The tract at residues 1–643 (MAQGSRRRKV…TPCESGWTRE (643 aa)) is necessary and sufficient for the interaction with SQSTM1. Disordered regions lie at residues 305–334 (PSEDENQEVSEEKDRTGVKSEKDGEGRPGC), 663–714 (SIPG…GKIV), 1038–1057 (CAFGEEIQMGGQPAASSGLG), 1090–1209 (QPQE…EGKE), 1517–1544 (SLRNPASMEPVTPSAGPEWNPQSGSCLQ), and 1565–1590 (DSQPQSSGPLGSISGVGSGGLSSRNE). Basic and acidic residues predominate over residues 314-330 (SEEKDRTGVKSEKDGEG). The 278-residue stretch at 333–610 (GCPTCQKELR…IPRLLVQPIQ (278 aa)) folds into the BEACH domain. Residues 668 to 693 (AGDQPGSSSSQASPGLLPFSAPSGSR) are compositionally biased toward low complexity. Polar residues-rich tracts occupy residues 1100–1112 (GQLSDKSSTSEAS) and 1131–1140 (VKSGDSSQDL). A compositionally biased stretch (acidic residues) spans 1145–1166 (GSEEEEEEEEGCVVLEEEEQDE). WD repeat units follow at residues 1638-1677 (GHTGAVKCVAALSSEDFFLSGSKDRTVRLWPLYNYGDGTS), 1684-1724 (IYAQ…TLRT), 1776-1815 (LNPGLVRSLAVSPSGRSVVAGFSSGFMVLLDTRTGLVLRG), 1818-1856 (AHEGDILQIKAVEGSVIVSSSSDHSLTVWKELEQKPTHH), and 1903-1933 (NFRGTLTSLALLPTKRHLLLGSDNGIIRLLA).

The protein belongs to the WD repeat WDR81 family. As to quaternary structure, interacts with WDR91; involved in early to late endosome cargo transport. Interacts with BECN1; negatively regulates the PI3 kinase/PI3K activity associated with endosomal membranes. Interacts with SQSTM1; the interaction is direct and regulates the interaction of SQSTM1 with ubiquitinated proteins. Interacts with MAP1LC3C; recruits MAP1LC3C to ubiquitinated protein aggregates in the aggrephagy process.

It localises to the early endosome membrane. The protein localises to the late endosome membrane. Its subcellular location is the lysosome membrane. It is found in the cytoplasmic vesicle. The protein resides in the autophagosome membrane. It localises to the mitochondrion. The protein localises to the cytoplasm. Its subcellular location is the cytosol. Functionally, functions as a negative regulator of the PI3 kinase/PI3K activity associated with endosomal membranes via BECN1, a core subunit of the PI3K complex. By modifying the phosphatidylinositol 3-phosphate/PtdInsP3 content of endosomal membranes may regulate endosome fusion, recycling, sorting and early to late endosome transport. It is for instance, required for the delivery of cargos like BST2/tetherin from early to late endosome and thereby participates indirectly to their degradation by the lysosome. May also play a role in aggrephagy, the macroautophagic degradation of ubiquitinated protein aggregates. In this process, may regulate the interaction of SQSTM1 with ubiquitinated proteins and also recruit MAP1LC3C. May also be involved in maintenance of normal mitochondrial structure and organization. The chain is WD repeat-containing protein 81 from Rattus norvegicus (Rat).